Here is a 440-residue protein sequence, read N- to C-terminus: Protein ABHD8 (440 aa).

Positions 123 to 158 (DPAGSDGRSAPGSGSGSGSGSGSGGRRRRARRPKRT) are disordered. Low complexity predominate over residues 124–134 (PAGSDGRSAPG). The span at 135–146 (SGSGSGSGSGSG) shows a compositional bias: gly residues. The span at 147-158 (GRRRRARRPKRT) shows a compositional bias: basic residues. The region spanning 178 to 280 (VLFFIHGVGG…HKVIMINGGG (103 aa)) is the AB hydrolase-1 domain. Catalysis depends on charge relay system residues Ser253, Asp371, and His399.

It belongs to the AB hydrolase superfamily. In terms of assembly, interacts with NLRP3 (via NACHT and LLR domains); this interaction is enhanced in the presence of NLRP3 inflammasome inducers, such as ATP, nigericin, silica, or alum. Interacts with ZDHHC12.

It is found in the cytoplasm. Negatively regulates NLRP3-driven inflammation. Promotes NLRP3 degradation through the chaperone-mediated autophagy (CMA) pathway, hence attenuating inflammasome activation and IL1B secretion. Acts by recruiting palmitoyltransferase ZDHHC12 to NLRP3, facilitating NLRP3 palmitoylation and subsequent degradation. In Macaca fascicularis (Crab-eating macaque), this protein is Protein ABHD8.